A 254-amino-acid chain; its full sequence is E3 ubiquitin-protein ligase NEURL3 (254 aa).

In terms of domain architecture, NHR spans 17–174 (ALSFHGNATG…TTKAIELLDP (158 aa)). The segment at 197–236 (CVICFHNTANTRLMPCGHSHFCGSCAWHIFKDTARCPICR) adopts an RING-type zinc-finger fold.

Expressed in alveolar epithelial type II cells.

Its subcellular location is the cytoplasm. It catalyses the reaction S-ubiquitinyl-[E2 ubiquitin-conjugating enzyme]-L-cysteine + [acceptor protein]-L-lysine = [E2 ubiquitin-conjugating enzyme]-L-cysteine + N(6)-ubiquitinyl-[acceptor protein]-L-lysine.. It functions in the pathway protein modification; protein ubiquitination. In terms of biological role, E3 ubiquitin-protein ligase that plays a role in various biological processes such as lung development or innate immunity. Seems to utilize UBE2E1. Promotes innate antiviral response by catalyzing 'Lys-63'-linked ubiquitination of IRF7. Plays an essential role in TLR4-mediated activation of MAPK pathways by promoting 'Lys-48'-linked polyubiquitination of the phosphatase DUSP1/MKP1. This chain is E3 ubiquitin-protein ligase NEURL3 (Neurl3), found in Mus musculus (Mouse).